A 285-amino-acid chain; its full sequence is Phycobilisome 31.6 kDa linker polypeptide, phycocyanin-associated, rod (285 aa).

The region spanning 1-180 (MPITTAASRL…LYRGYATSDR (180 aa)) is the PBS-linker domain.

Belongs to the phycobilisome linker protein family.

The protein localises to the cellular thylakoid membrane. Its function is as follows. Rod linker protein, associated with phycocyanin. Linker polypeptides determine the state of aggregation and the location of the disk-shaped phycobiliprotein units within the phycobilisome and modulate their spectroscopic properties in order to mediate a directed and optimal energy transfer. In Microchaete diplosiphon (Fremyella diplosiphon), this protein is Phycobilisome 31.6 kDa linker polypeptide, phycocyanin-associated, rod (cpcI3).